The sequence spans 286 residues: UDP-3-O-acyl-N-acetylglucosamine deacetylase (286 aa).

3 residues coordinate Zn(2+): histidine 81, histidine 240, and aspartate 244. Residue histidine 266 is the Proton donor of the active site.

Belongs to the LpxC family. Requires Zn(2+) as cofactor.

It carries out the reaction a UDP-3-O-[(3R)-3-hydroxyacyl]-N-acetyl-alpha-D-glucosamine + H2O = a UDP-3-O-[(3R)-3-hydroxyacyl]-alpha-D-glucosamine + acetate. It functions in the pathway glycolipid biosynthesis; lipid IV(A) biosynthesis; lipid IV(A) from (3R)-3-hydroxytetradecanoyl-[acyl-carrier-protein] and UDP-N-acetyl-alpha-D-glucosamine: step 2/6. Catalyzes the hydrolysis of UDP-3-O-myristoyl-N-acetylglucosamine to form UDP-3-O-myristoylglucosamine and acetate, the committed step in lipid A biosynthesis. This chain is UDP-3-O-acyl-N-acetylglucosamine deacetylase, found in Francisella tularensis subsp. tularensis (strain FSC 198).